The primary structure comprises 473 residues: Pup--protein ligase (473 aa).

Mg(2+) is bound at residue Glu9. Position 54 (Arg54) interacts with ATP. Position 56 (Tyr56) interacts with Mg(2+). Residue Asp58 is the Proton acceptor of the active site. Mg(2+) is bound at residue Glu64. Positions 67 and 425 each coordinate ATP.

The protein belongs to the Pup ligase/Pup deamidase family. Pup-conjugating enzyme subfamily.

It carries out the reaction ATP + [prokaryotic ubiquitin-like protein]-L-glutamate + [protein]-L-lysine = ADP + phosphate + N(6)-([prokaryotic ubiquitin-like protein]-gamma-L-glutamyl)-[protein]-L-lysine.. The protein operates within protein degradation; proteasomal Pup-dependent pathway. It participates in protein modification; protein pupylation. Functionally, catalyzes the covalent attachment of the prokaryotic ubiquitin-like protein modifier Pup to the proteasomal substrate proteins, thereby targeting them for proteasomal degradation. This tagging system is termed pupylation. The ligation reaction involves the side-chain carboxylate of the C-terminal glutamate of Pup and the side-chain amino group of a substrate lysine. The sequence is that of Pup--protein ligase from Brachybacterium faecium (strain ATCC 43885 / DSM 4810 / JCM 11609 / LMG 19847 / NBRC 14762 / NCIMB 9860 / 6-10).